A 915-amino-acid polypeptide reads, in one-letter code: DNA (cytosine-5)-methyltransferase 2 (915 aa).

Low complexity predominate over residues 1–14; it reads MAPSSPSSARPTRA. Positions 1-171 are disordered; the sequence is MAPSSPSSAR…STAANKPEED (171 aa). The span at 15–30 shows a compositional bias: basic and acidic residues; that stretch reads SGRERSAMAEEIHQNQ. Residues 42–57 are compositionally biased toward basic residues; sequence AKRRRKAASSGKKPKP. Basic and acidic residues predominate over residues 71–80; the sequence is KKGETEKTEP. Residues 81–108 show a composition bias toward acidic residues; that stretch reads VVDDVCAEEPDEEELAMGEEEAEAEEQA. Residues 109–119 are compositionally biased toward low complexity; it reads MQEVVAAVAAG. The BAH domain maps to 188–313; that stretch reads IVYCLGDDVY…VAYSTFANIS (126 aa). A compositionally biased stretch (polar residues) spans 315-328; sequence ENGQSGSETASGIS. The interval 315-338 is disordered; it reads ENGQSGSETASGISSDDAGLETSS. Residues 345 to 876 form the SAM-dependent MTase C5-type domain; that stretch reads ATLLDLYSGC…YCLGQAYLGE (532 aa). A Chromo domain is found at 445 to 508; sequence FVVQKLIGIR…EGRKRKILPL (64 aa). C521 is an active-site residue.

This sequence belongs to the class I-like SAM-binding methyltransferase superfamily. C5-methyltransferase family.

The protein localises to the nucleus. It catalyses the reaction a 2'-deoxycytidine in DNA + S-adenosyl-L-methionine = a 5-methyl-2'-deoxycytidine in DNA + S-adenosyl-L-homocysteine + H(+). In terms of biological role, may be involved in the CpXpG methylation and in gene silencing. The polypeptide is DNA (cytosine-5)-methyltransferase 2 (ZMET5) (Zea mays (Maize)).